We begin with the raw amino-acid sequence, 843 residues long: Phosphatidylinositol-glycan-specific phospholipase D (843 aa).

The N-terminal stretch at 1-23 (MSVGRLWSGLLLLLLFFCSRSSS) is a signal peptide. N-linked (GlcNAc...) asparagine glycosylation is found at Asn-94, Asn-271, Asn-292, Asn-308, and Asn-322. 7 FG-GAP repeats span residues 368 to 429 (SPSA…GLPP), 435 to 498 (DKEA…GRLS), 500 to 560 (SPNI…RNDK), 564 to 625 (TLDE…SLGR), 635 to 695 (QREI…GATR), 707 to 773 (ALFS…TLGD), and 791 to 843 (QYVL…FSSD). Residues Asn-483, Asn-502, Asn-592, Asn-605, and Asn-661 are each glycosylated (N-linked (GlcNAc...) asparagine).

The protein belongs to the GPLD1 family. Monomer. Glycosylated.

The protein resides in the secreted. It catalyses the reaction a 6-(alpha-D-glucosaminyl)-1-(1,2-diacyl-sn-glycero-3-phospho)-1D-myo-inositol + H2O = 6-(alpha-D-glucosaminyl)-1D-myo-inositol + a 1,2-diacyl-sn-glycero-3-phosphate + H(+). Functionally, this protein hydrolyzes the inositol phosphate linkage in proteins anchored by phosphatidylinositol glycans (GPI-anchor) thus releasing these proteins from the membrane. This chain is Phosphatidylinositol-glycan-specific phospholipase D (Gpld1), found in Rattus norvegicus (Rat).